Reading from the N-terminus, the 150-residue chain is Ribonuclease K6 (150 aa).

The first 23 residues, 1–23 (MVLCFPLLLLLLVLWGPVCPLHA), serve as a signal peptide directing secretion. H38 (proton acceptor) is an active-site residue. 4 disulfides stabilise this stretch: C46-C104, C60-C114, C78-C129, and C85-C92. N55 is a glycosylation site (N-linked (GlcNAc...) asparagine). Substrate-binding positions include 61–65 (KHQNT) and K86. N100 is a glycosylation site (N-linked (GlcNAc...) asparagine). R105 contributes to the substrate binding site. The active-site Proton donor is the H145.

It belongs to the pancreatic ribonuclease family. In terms of assembly, interacts (via N-terminus) with bacterial lipopolysaccharide (LPS). In terms of tissue distribution, highly expressed in spleen (at protein level). Has little or no expression in healthy kidneys (at protein level). Detected in interstitial leukocytes in infected kidneys (at protein level). Expressed in ureter where it localizes to urothelial and submucosal leukocytes (at protein level). Strong expression in lung and thymus, and lower expression in heart, placenta, pancreas, liver, brain and skeletal muscle. Also expressed in monocytes and neutrophils.

The protein resides in the secreted. It localises to the lysosome. Its subcellular location is the cytoplasmic granule. Functionally, ribonuclease which shows a preference for the pyrimidines uridine and cytosine. Has potent antibacterial activity against a range of Gram-positive and Gram-negative bacteria, including P.aeruginosa, A.baumanii, M.luteus, S.aureus, E.faecalis, E.faecium, S.saprophyticus and E.coli. Causes loss of bacterial membrane integrity, and also promotes agglutination of Gram-negative bacteria. Probably contributes to urinary tract sterility. Bactericidal activity is independent of RNase activity. The polypeptide is Ribonuclease K6 (RNASE6) (Homo sapiens (Human)).